A 416-amino-acid polypeptide reads, in one-letter code: MATIEDGTSEDRVANDEYKIWKKNTPFLYDLVMTHALEWPSLSVQWLPEIEKESSDHTVHRLILGTHTSDEQNHLLISKICMPTDEAQFDASRYDTERGEFGGFGAVNGKVEPDIRINHEGEVNRARYMPQKPTIIATKSPSADVYIFDYTKYPSVPKDNTFNPLLKLKGHTKEGYGLSWNPNKEGLILSASDDQTVCHWDINGNAGANGELKAREIFKGHESVVEDVAWHVLHDGVFGSVGDDKKLLIWDLRTNVPGHAIDAHSAEVNCLAFNPYSEFILATGSADKTVALWDLRNLRLKLHSFESHRDEIFQVQWSPHNETILASSGTDKRLHVWDLSKIGEDQTAEDAEDGPPELLFIHGGHTAKISDFSWNPNEPWVVCSVSEDNILQVWQMADNIYNDVEDETPADMVERS.

WD repeat units follow at residues Asn-118–Lys-158, Gly-170–Gly-210, Gly-220–Ala-260, Ala-263–His-303, Ser-307–Thr-347, and Gly-364–Val-404.

Belongs to the WD repeat RBAP46/RBAP48/MSI1 family. As to quaternary structure, binds directly to helix 1 of the histone fold of histone H4, a region that is not accessible when H4 is in chromatin. Probable component of a NuRD-like complex, composed of at least lin-53 and hda-1. Interacts with lin-35. Interacts with hda-1; the interaction is direct. Component of the DRM complex, at least composed of lin-9, lin-35, lin-37, lin-52, lin-53, lin-54- dpl-1 and efl-1. Interacts with hcp-3.

Its subcellular location is the nucleus. It is found in the chromosome. The protein resides in the centromere. Core histone-binding subunit that may target chromatin assembly factors, chromatin remodeling factors and histone deacetylases to their histone substrates in a manner that is regulated by nucleosomal DNA. Required for hcp-3 and his-1 stabilization, localization of hcp-3 to centromeres and for proper chromosome segregation. Synthetic multivulva class B (synMuvB) protein. SynMuvB proteins are required to repress the induction of vulval development by Ras signaling and probably act by forming the multiprotein DRM complex that represses transcription. The protein is Probable histone-binding protein lin-53 of Caenorhabditis briggsae.